Reading from the N-terminus, the 257-residue chain is Ribosome-recycling factor, mitochondrial (257 aa).

It belongs to the RRF family.

It is found in the mitochondrion. In terms of biological role, necessary for protein synthesis in mitochondria. Functions as a ribosome recycling factor in mitochondria. This chain is Ribosome-recycling factor, mitochondrial (RRF1), found in Debaryomyces hansenii (strain ATCC 36239 / CBS 767 / BCRC 21394 / JCM 1990 / NBRC 0083 / IGC 2968) (Yeast).